The primary structure comprises 270 residues: Glutamate 5-kinase (270 aa).

ATP is bound at residue K15. Residues S55, D142, and N158 each contribute to the substrate site. ATP is bound by residues 178–179 (SD) and 220–226 (TGGMLSK).

Belongs to the glutamate 5-kinase family.

It localises to the cytoplasm. The enzyme catalyses L-glutamate + ATP = L-glutamyl 5-phosphate + ADP. It participates in amino-acid biosynthesis; L-proline biosynthesis; L-glutamate 5-semialdehyde from L-glutamate: step 1/2. Its function is as follows. Catalyzes the transfer of a phosphate group to glutamate to form L-glutamate 5-phosphate. This Streptococcus uberis (strain ATCC BAA-854 / 0140J) protein is Glutamate 5-kinase.